Here is a 563-residue protein sequence, read N- to C-terminus: Arginine--tRNA ligase (563 aa).

The 'HIGH' region signature appears at 120–130; the sequence is PNIAKPFHIGH.

The protein belongs to the class-I aminoacyl-tRNA synthetase family. Monomer.

The protein localises to the cytoplasm. It catalyses the reaction tRNA(Arg) + L-arginine + ATP = L-arginyl-tRNA(Arg) + AMP + diphosphate. This is Arginine--tRNA ligase from Clostridium botulinum (strain Langeland / NCTC 10281 / Type F).